Reading from the N-terminus, the 118-residue chain is NADH-quinone oxidoreductase subunit A (118 aa).

A run of 3 helical transmembrane segments spans residues 5–25 (YLGI…AFAV), 61–81 (FLYA…YPWA), and 90–110 (FAIV…WYAW).

This sequence belongs to the complex I subunit 3 family. As to quaternary structure, NDH-1 is composed of 14 different subunits. Subunits NuoA, H, J, K, L, M, N constitute the membrane sector of the complex.

The protein localises to the cell membrane. The enzyme catalyses a quinone + NADH + 5 H(+)(in) = a quinol + NAD(+) + 4 H(+)(out). Its function is as follows. NDH-1 shuttles electrons from NADH, via FMN and iron-sulfur (Fe-S) centers, to quinones in the respiratory chain. The immediate electron acceptor for the enzyme in this species is believed to be a menaquinone. Couples the redox reaction to proton translocation (for every two electrons transferred, four hydrogen ions are translocated across the cytoplasmic membrane), and thus conserves the redox energy in a proton gradient. This is NADH-quinone oxidoreductase subunit A from Heliobacterium modesticaldum (strain ATCC 51547 / Ice1).